Consider the following 156-residue polypeptide: Small ribosomal subunit protein uS7 (156 aa).

This sequence belongs to the universal ribosomal protein uS7 family. As to quaternary structure, part of the 30S ribosomal subunit. Contacts proteins S9 and S11.

Functionally, one of the primary rRNA binding proteins, it binds directly to 16S rRNA where it nucleates assembly of the head domain of the 30S subunit. Is located at the subunit interface close to the decoding center, probably blocks exit of the E-site tRNA. The sequence is that of Small ribosomal subunit protein uS7 from Bacillus cereus (strain ZK / E33L).